Consider the following 362-residue polypeptide: Chorismate synthase (362 aa).

R46 contributes to the NADP(+) binding site. FMN-binding positions include 122–124 (RSS), 238–239 (NA), G278, 293–297 (KPTPS), and R319.

This sequence belongs to the chorismate synthase family. In terms of assembly, homotetramer. It depends on FMNH2 as a cofactor.

The enzyme catalyses 5-O-(1-carboxyvinyl)-3-phosphoshikimate = chorismate + phosphate. The protein operates within metabolic intermediate biosynthesis; chorismate biosynthesis; chorismate from D-erythrose 4-phosphate and phosphoenolpyruvate: step 7/7. Functionally, catalyzes the anti-1,4-elimination of the C-3 phosphate and the C-6 proR hydrogen from 5-enolpyruvylshikimate-3-phosphate (EPSP) to yield chorismate, which is the branch point compound that serves as the starting substrate for the three terminal pathways of aromatic amino acid biosynthesis. This reaction introduces a second double bond into the aromatic ring system. This Campylobacter jejuni subsp. jejuni serotype O:2 (strain ATCC 700819 / NCTC 11168) protein is Chorismate synthase.